The chain runs to 441 residues: Acetyltransferase TRI7 (441 aa).

7 consecutive transmembrane segments (helical) span residues 14–34 (GILY…LIII), 75–95 (SLTL…LVLT), 158–178 (IWFI…LDII), 306–326 (IAFV…FCWG), 336–356 (LAFF…QALC), 377–397 (LVGY…YLYH), and 421–441 (TATM…GIEV).

This sequence belongs to the wax synthase family.

It is found in the membrane. Its pathway is sesquiterpene biosynthesis; trichothecene biosynthesis. In terms of biological role, acetyltransferase; part of the core gene cluster that mediates the biosynthesis of trichothecenes, a very large family of chemically related bicyclic sesquiterpene compounds acting as mycotoxins, including T2-toxin. The biosynthesis of trichothecenes begins with the cyclization of farnesyl diphosphate to trichodiene and is catalyzed by the trichodiene synthase TRI5. Trichodiene undergoes a series of oxygenations catalyzed by the cytochrome P450 monooxygenase TRI4. TRI4 controls the addition of four oxygens at C-2, C-3, C-11, and the C-12, C-13-epoxide to form the intermediate isotrichotriol. Isotrichotriol then undergoes a non-enzymatic isomerization and cyclization to form isotrichodermol. During this process, the oxygen at the C-2 position becomes the pyran ring oxygen and the hydroxyl group at C-11 is lost. More complex type A trichothecenes are built by modifying isotrichodermol through a series of paired hydroxylation and acetylation or acylation steps. Isotrichodermol is converted to isotrichodermin by the acetyltransferase TRI101. TRI101 encodes a C-3 transacetylase that acts as a self-protection or resistance factor during biosynthesis and that the presence of a free C-3 hydroxyl group is a key component of Fusarium trichothecene phytotoxicity. A second hydroxyl group is added to C-15 by the trichothecene C-15 hydroxylase TRI11, producing 15-decalonectrin, which is then acetylated by TRI3, producing calonectrin. A third hydroxyl group is added at C-4 by the cytochrome P450 monooxygenase TRI13, converting calonectrin to 3,15-diacetoxyspirpenol, which is subsequently acetylated by the acetyltransferase TRI7. A fourth hydroxyl group is added to C-8 by the cytochrome P450 monooxygenase TRI1, followed by the addition of an isovaleryl moiety by TRI16. Finally, the acetyl group is removed from the C-3 position by the trichothecene C-3 esterase TRI8 to produce T-2 toxin. This Fusarium sporotrichioides protein is Acetyltransferase TRI7.